The primary structure comprises 543 residues: NADH-ubiquinone oxidoreductase chain 4 (543 aa).

The next 14 helical transmembrane spans lie at 5–25 (FLMF…IIWS), 84–104 (VVAF…YILF), 129–149 (VDGI…IALM), 161–181 (SYLI…LVLD), 182–202 (ILLF…LIGL), 213–233 (FYIF…ILTM), 254–274 (IQIF…PTIF), 287–307 (PLGG…YGIF), 321–341 (YTYI…FSTL), 350–370 (IAYS…SNTI), 377–397 (ILLG…VGGV), 416–436 (MAPL…GVPL), 456–476 (LLGL…IFLF), and 501–521 (FYAL…PSII).

The protein belongs to the complex I subunit 4 family.

The protein resides in the mitochondrion membrane. It catalyses the reaction a ubiquinone + NADH + 5 H(+)(in) = a ubiquinol + NAD(+) + 4 H(+)(out). Core subunit of the mitochondrial membrane respiratory chain NADH dehydrogenase (Complex I) that is believed to belong to the minimal assembly required for catalysis. Complex I functions in the transfer of electrons from NADH to the respiratory chain. The immediate electron acceptor for the enzyme is believed to be ubiquinone. This is NADH-ubiquinone oxidoreductase chain 4 (ndh-4) from Neurospora crassa (strain ATCC 24698 / 74-OR23-1A / CBS 708.71 / DSM 1257 / FGSC 987).